The following is a 418-amino-acid chain: Exodeoxyribonuclease 7 large subunit (418 aa).

The protein belongs to the XseA family. Heterooligomer composed of large and small subunits.

Its subcellular location is the cytoplasm. It catalyses the reaction Exonucleolytic cleavage in either 5'- to 3'- or 3'- to 5'-direction to yield nucleoside 5'-phosphates.. In terms of biological role, bidirectionally degrades single-stranded DNA into large acid-insoluble oligonucleotides, which are then degraded further into small acid-soluble oligonucleotides. The chain is Exodeoxyribonuclease 7 large subunit from Acaryochloris marina (strain MBIC 11017).